Consider the following 463-residue polypeptide: Bifunctional protein HldE (463 aa).

The interval 1–315 (MKKILVIGDL…LILNQTHPKI (315 aa)) is ribokinase. 191 to 194 (NRAE) contacts ATP. Residue Asp-260 is part of the active site. Residues 334-463 (FTNGCFDILH…IEKIKRTHND (130 aa)) form a cytidylyltransferase region.

This sequence in the N-terminal section; belongs to the carbohydrate kinase PfkB family. It in the C-terminal section; belongs to the cytidylyltransferase family. In terms of assembly, homodimer.

It catalyses the reaction D-glycero-beta-D-manno-heptose 7-phosphate + ATP = D-glycero-beta-D-manno-heptose 1,7-bisphosphate + ADP + H(+). The catalysed reaction is D-glycero-beta-D-manno-heptose 1-phosphate + ATP + H(+) = ADP-D-glycero-beta-D-manno-heptose + diphosphate. The protein operates within nucleotide-sugar biosynthesis; ADP-L-glycero-beta-D-manno-heptose biosynthesis; ADP-L-glycero-beta-D-manno-heptose from D-glycero-beta-D-manno-heptose 7-phosphate: step 1/4. Its pathway is nucleotide-sugar biosynthesis; ADP-L-glycero-beta-D-manno-heptose biosynthesis; ADP-L-glycero-beta-D-manno-heptose from D-glycero-beta-D-manno-heptose 7-phosphate: step 3/4. It participates in bacterial outer membrane biogenesis; LPS core biosynthesis. Functionally, catalyzes the phosphorylation of D-glycero-D-manno-heptose 7-phosphate at the C-1 position to selectively form D-glycero-beta-D-manno-heptose-1,7-bisphosphate. Its function is as follows. Catalyzes the ADP transfer from ATP to D-glycero-beta-D-manno-heptose 1-phosphate, yielding ADP-D-glycero-beta-D-manno-heptose. In Helicobacter pylori (strain J99 / ATCC 700824) (Campylobacter pylori J99), this protein is Bifunctional protein HldE.